Consider the following 296-residue polypeptide: Ribosomal RNA small subunit methyltransferase H (296 aa).

S-adenosyl-L-methionine-binding positions include 38 to 40, Glu57, Phe88, Asp103, and His110; that span reads GVH.

This sequence belongs to the methyltransferase superfamily. RsmH family.

The protein resides in the cytoplasm. It catalyses the reaction cytidine(1402) in 16S rRNA + S-adenosyl-L-methionine = N(4)-methylcytidine(1402) in 16S rRNA + S-adenosyl-L-homocysteine + H(+). Its function is as follows. Specifically methylates the N4 position of cytidine in position 1402 (C1402) of 16S rRNA. This is Ribosomal RNA small subunit methyltransferase H from Borreliella burgdorferi (strain ZS7) (Borrelia burgdorferi).